The following is a 344-amino-acid chain: Type II methyltransferase M.FnuDI (344 aa).

In terms of domain architecture, SAM-dependent MTase C5-type spans 1–330 (MKLLSLFSGA…KRIKETLTDK (330 aa)). Cysteine 71 is a catalytic residue.

Belongs to the class I-like SAM-binding methyltransferase superfamily. C5-methyltransferase family.

The catalysed reaction is a 2'-deoxycytidine in DNA + S-adenosyl-L-methionine = a 5-methyl-2'-deoxycytidine in DNA + S-adenosyl-L-homocysteine + H(+). A methylase, recognizes the double-stranded sequence 5'-GGCC-3', methylates C-? on both strands, and protects the DNA from cleavage by the FnuDI endonuclease. In Fusobacterium nucleatum, this protein is Type II methyltransferase M.FnuDI (fnuDIM).